We begin with the raw amino-acid sequence, 106 residues long: Small ribosomal subunit protein bS18 (106 aa).

A disordered region spans residues Met-1–Arg-41.

This sequence belongs to the bacterial ribosomal protein bS18 family. Part of the 30S ribosomal subunit. Forms a tight heterodimer with protein bS6.

Functionally, binds as a heterodimer with protein bS6 to the central domain of the 16S rRNA, where it helps stabilize the platform of the 30S subunit. The polypeptide is Small ribosomal subunit protein bS18 (Oenococcus oeni (strain ATCC BAA-331 / PSU-1)).